A 176-amino-acid chain; its full sequence is Large ribosomal subunit protein uL16 (176 aa).

It belongs to the universal ribosomal protein uL16 family.

In Thermoplasma acidophilum (strain ATCC 25905 / DSM 1728 / JCM 9062 / NBRC 15155 / AMRC-C165), this protein is Large ribosomal subunit protein uL16.